Here is a 273-residue protein sequence, read N- to C-terminus: Zinc finger protein AZF2 (273 aa).

A disordered region spans residues 33 to 64; that stretch reads LKRKRSKRQRSHSPSSSSSSPPRSRPKSQNQD. The span at 34-43 shows a compositional bias: basic residues; sequence KRKRSKRQRS. The span at 44 to 54 shows a compositional bias: low complexity; that stretch reads HSPSSSSSSPP. C2H2-type zinc fingers lie at residues 106-128 and 165-187; these read YKCNVCEKAFPSYQALGGHKASH and HECSICHKVFPTGQALGGHKRCH. A disordered region spans residues 195–215; it reads GGGGGSKSISHSGSVSSTVSE. The span at 201–213 shows a compositional bias: low complexity; sequence KSISHSGSVSSTV.

Expressed in roots, radicles, cotyledons, hypocotyls, leaf veins, stems, sepals, petals, stamens, placenta, funiculi and maturated seeds.

The protein resides in the nucleus. Its function is as follows. Transcriptional repressor involved in the inhibition of plant growth under abiotic stress conditions. Can repress the expression of various genes, including osmotic stress and abscisic acid-repressive genes and auxin-inducible genes, by binding to their promoter regions in a DNA sequence-specific manner. Acts as a negative regulator of abscisic acid (ABA) signaling during seed germination. Probably involved in jasmonate (JA) early signaling response. May regulate the expression of the JA biosynthesis gene LOX3 and control the expression of TIFY10A/JAZ1, a key repressor in the JA signaling cascade. May act as a positive regulator of leaf senescence. Has been identified as a suppressor of the deficiency of yeast snf4 mutant to grow on non-fermentable carbon source. The sequence is that of Zinc finger protein AZF2 (AZF2) from Arabidopsis thaliana (Mouse-ear cress).